The sequence spans 339 residues: MTPPPIRFGYKASAEQFGPSELADLAVAAEEHGFDSVFISDHLQPWRHDGGHAPASLPWLGAVGARTQRVILGTSVLTPTIRYHPGVIAQAFATLGSMYPGRIVLGVGTGESLNEVPLGLAWPEQKERFARLKESVNLIHELWTGERVTFEGEYYRTDKATIYDRPADPVPIYIGASGPAATRLAGRIADGFITTSGKAPSLYTDTLLPALRDGVEKAGRRLDELDTLMEMKVSFDTDRERAMQDTRFWAALALKPEQKAGVEDPLEMQRLADELPIEQAASRWIVSDDPDEHVEKIRTYLDLGFRHLVFHAPGHDQQRFLALYGEQILPRLRALVGQG.

Residue Asp41 coordinates coenzyme F420-(gamma-Glu)n. The Proton donor role is filled by His42. Residues Thr78 and Thr109–Gly110 each bind coenzyme F420-(gamma-Glu)n. Glu111 serves as the catalytic Proton acceptor. Coenzyme F420-(gamma-Glu)n is bound by residues Asn114, Ser177–Gly178, and Ala180–Ala181. The substrate site is built by Thr195, Lys198, Lys259, and Arg283.

It belongs to the F420-dependent glucose-6-phosphate dehydrogenase family. As to quaternary structure, homodimer.

It catalyses the reaction oxidized coenzyme F420-(gamma-L-Glu)(n) + D-glucose 6-phosphate + H(+) = 6-phospho-D-glucono-1,5-lactone + reduced coenzyme F420-(gamma-L-Glu)(n). Catalyzes the coenzyme F420-dependent oxidation of glucose 6-phosphate (G6P) to 6-phosphogluconolactone. The sequence is that of F420-dependent glucose-6-phosphate dehydrogenase from Nakamurella multipartita (strain ATCC 700099 / DSM 44233 / CIP 104796 / JCM 9543 / NBRC 105858 / Y-104) (Microsphaera multipartita).